The chain runs to 412 residues: Fringe glycosyltransferase (412 aa).

The Cytoplasmic portion of the chain corresponds to 1–15 (MMSLTVLSPPQRFKR). Residues 16–34 (ILQAMMLAVAVVYMTLLLY) form a helical; Signal-anchor for type II membrane protein membrane-spanning segment. Over 35 to 412 (QSAYGYPGIQ…FPYFSFCPPR (378 aa)) the chain is Lumenal. A substrate-binding site is contributed by Arg-164. Cystine bridges form between Cys-204–Cys-215 and Cys-233–Cys-297. Asp-237 is a substrate binding site. Asp-238 is a binding site for Mn(2+). Residue Asp-327 is part of the active site. His-351 contacts Mn(2+). Residues Cys-400 and Cys-409 are joined by a disulfide bond.

It belongs to the glycosyltransferase 31 family. The cofactor is Mn(2+). In terms of tissue distribution, expressed in dorsal cells.

It is found in the golgi apparatus membrane. The catalysed reaction is 3-O-(alpha-L-fucosyl)-L-threonyl-[EGF-like domain protein] + UDP-N-acetyl-alpha-D-glucosamine = 3-O-(N-acetyl-beta-D-glucosaminyl-(1-&gt;3)-alpha-L-fucosyl)-L-threonyl-[EGF-like domain protein] + UDP + H(+). It catalyses the reaction 3-O-(alpha-L-fucosyl)-L-seryl-[EGF-like domain protein] + UDP-N-acetyl-alpha-D-glucosamine = 3-O-(N-acetyl-beta-D-glucosaminyl-(1-&gt;3)-alpha-L-fucosyl)-L-seryl-[EGF-like domain protein] + UDP + H(+). Its function is as follows. Glycosyltransferase involved in the elongation of O-linked ligands to activate Notch signaling. Possesses fucose-specific beta-1,3-N-acetylglucosaminyltransferase activity; extends the O-linked fucose on the Notch EGF repeats. Boundary-specific cell-signaling molecule that is responsible for dorsal-ventral cell interactions during wing development. The polypeptide is Fringe glycosyltransferase (fng) (Drosophila melanogaster (Fruit fly)).